Consider the following 603-residue polypeptide: Glutathione-regulated potassium-efflux system protein KefB (603 aa).

13 helical membrane-spanning segments follow: residues 5 to 25 (ALLT…PIAA), 29 to 49 (IGAV…GLGF), 53 to 73 (VEAI…IIGL), 87 to 107 (IFGV…GALY), 115 to 135 (SALI…LQLM), 152 to 172 (VLLF…ILAG), 180 to 202 (WERI…YLVR), 207 to 227 (FIAA…LVLG), 230 to 250 (LFME…GILL), 268 to 288 (GLLL…GILY), 291 to 311 (IVKI…VLYF), 326 to 346 (FAGV…AAAS), and 356 to 376 (PLLL…MQVI). An RCK N-terminal domain is found at 400–521 (EPQVIVVGFG…VRHFSRETFS (122 aa)).

It belongs to the monovalent cation:proton antiporter 2 (CPA2) transporter (TC 2.A.37) family. KefB subfamily. As to quaternary structure, interacts with the regulatory subunit KefG.

It localises to the cell inner membrane. Its function is as follows. Pore-forming subunit of a potassium efflux system that confers protection against electrophiles. Catalyzes K(+)/H(+) antiport. The protein is Glutathione-regulated potassium-efflux system protein KefB of Pectobacterium atrosepticum (strain SCRI 1043 / ATCC BAA-672) (Erwinia carotovora subsp. atroseptica).